The chain runs to 634 residues: Growth hormone receptor (634 aa).

A signal peptide spans 1–18 (MDLWQLLLTLAVAGSSDA). Topologically, residues 19–260 (FSGSEATPAF…NPSACEEDFQ (242 aa)) are extracellular. Asn46 carries an N-linked (GlcNAc...) asparagine glycan. Cys56 and Cys66 are joined by a disulfide. Asn73 carries N-linked (GlcNAc...) asparagine glycosylation. A disulfide bond links Cys97 and Cys108. Residue Asn111 is glycosylated (N-linked (GlcNAc...) asparagine). Cys122 and Cys136 form a disulfide bridge. A Fibronectin type-III domain is found at 147 to 250 (PPVGLNWTLL…EVLLITFPQM (104 aa)). N-linked (GlcNAc...) asparagine glycosylation is found at Asn152, Asn157, and Asn196. Positions 236 to 240 (YGKFS) match the WSXWS motif motif. A helical membrane pass occupies residues 261–284 (FPWFLIIMFGILGLAVTLFLLIFS). Residues 285–634 (KQQRIKMLIL…STDQLNKIMP (350 aa)) are Cytoplasmic-facing. A required for JAK2 binding region spans residues 290 to 375 (KMLILPPVPV…HEKSLNIFGA (86 aa)). Positions 293–301 (ILPPVPVPK) match the Box 1 motif motif. Positions 336 to 345 (DSWVEFIELD) match the UbE motif motif. Position 337 is a phosphoserine (Ser337). Tyr483 and Tyr591 each carry phosphotyrosine.

The protein belongs to the type I cytokine receptor family. Type 1 subfamily. As to quaternary structure, on growth hormone (GH) binding, forms homodimers and binds JAK2 via a box 1-containing domain. Post-translationally, the soluble form (GHBP) is produced by phorbol ester-promoted proteolytic cleavage at the cell surface (shedding) by ADAM17/TACE. Shedding is inhibited by growth hormone (GH) binding to the receptor probably due to a conformational change in GHR rendering the receptor inaccessible to ADAM17. In terms of processing, on GH binding, phosphorylated on tyrosine residues in the cytoplasmic domain by JAK2. Ubiquitinated by the ECS(SOCS2) complex following ligand-binding and phosphorylation by JAK2, leading to its degradation by the proteasome. Regulation by the ECS(SOCS2) complex acts as a negative feedback loop of growth hormone receptor signaling. Ubiquitination is not sufficient for GHR internalization.

Its subcellular location is the cell membrane. The protein resides in the secreted. Receptor for pituitary gland growth hormone (GH1) involved in regulating postnatal body growth. On ligand binding, couples to the JAK2/STAT5 pathway. In terms of biological role, the soluble form (GHBP) acts as a reservoir of growth hormone in plasma and may be a modulator/inhibitor of GH signaling. In Bos indicus (Zebu), this protein is Growth hormone receptor (GHR).